The following is a 1115-amino-acid chain: MPRRTDLHHVLVIGSGPIVIGQACEFDYSGTQACRVLRAEGLQVSLVNSNPATIMTDPEFADHTYVEPITPAFVERVIAQQAERGNKIDALLATLGGQTALNTAVALYESGVLEKYGVELIGADFDAIQRGEDRQRFKDIVAKAGGESARSRVCFTMAEVRETVAELGLPVVVRPSFTMGGLGSGIAYSTDEVDRMAGAGLAASPSANVLIEESIYGWKEFELELMRDGHDNVVVVCSIENVDPMGVHTGDSVTVAPAMTLTDREYQRMRDLGIAILREVGVDTGGCNIQFAVNPRDGRLIVIEMNPRVSRSSALASKATGFPIAKIAAKLAIGYTLDEIVNDITGETPACFEPTLDYVVVKAPRFAFEKFPGADPTLTTTMKSVGEAMSLGRNFVEALGKVMRSLETTRAGFWTAPDPDGGIEEALTRLRTPAEGRLYDIELALRLGATVERVAEASGVDPWFIAQINELVNLRNELVAAPVLNAELLRRAKHSGLSDHQIASLRPELAGEAGVRSLRVRLGIHPVYKTVDTCAAEFEAQTPYHYSSYELDPAAETEVAPQTERPKVLILGSGPNRIGQGIEFDYSCVHAATTLSQAGFETVMVNCNPETVSTDYDTADRLYFEPLTFEDVLEVYHAEMESGSGGPGVAGVIVQLGGQTPLGLAHRLADAGVPIVGTPPEAIDLAEDRGAFGDLLSAAGLPAPKYGTATTFAQARRIAEEIGYPVLVRPSYVLGGRGMEIVYDEETLQGYITRATQLSPEHPVLVDRFLEDAVEIDVDALCDGAEVYIGGIMEHIEEAGIHSGDSACALPPVTLGRSDIAKVRKATEAIAHGIGVVGLLNVQYALKDDVLYVLEANPRASRTVPFVSKATAVPLAKACARIMLGATIAQLRAEGLLAVTGDGAHAARNAPIAVKEAVLPFHRFRRADGAAIDSLLGPEMKSTGEVMGIDRDFGSAFAKSQTAAYGSLPAQGTVFVSVANRDKRSLVFPVKRLADLGFRVLATEGTAEMLRRNGIPCDDVRKHFEPAQPGRPTMSAVDAIRAGEVNMVINTPYGNSGPRIDGYEIRSAAVAGNIPCITTVQGASAAVQGIEAGIRGDIGVRSLQELHRVIGGVER.

A carboxyphosphate synthetic domain region spans residues 1–407 (MPRRTDLHHV…ALGKVMRSLE (407 aa)). Residues R134, R174, G180, G181, E213, I215, E220, G246, V247, H248, Q290, and E304 each coordinate ATP. The ATP-grasp 1 domain maps to 138-333 (KDIVAKAGGE…IAKIAAKLAI (196 aa)). Residues Q290, E304, and N306 each coordinate Mg(2+). The Mn(2+) site is built by Q290, E304, and N306. Positions 408-559 (TTRAGFWTAP…ELDPAAETEV (152 aa)) are oligomerization domain. The segment at 560–965 (APQTERPKVL…AFAKSQTAAY (406 aa)) is carbamoyl phosphate synthetic domain. Positions 693–884 (GDLLSAAGLP…LAKACARIML (192 aa)) constitute an ATP-grasp 2 domain. ATP-binding residues include R729, R768, L770, E775, G800, I801, H802, S803, Q843, and E855. Positions 843, 855, and 857 each coordinate Mg(2+). Residues Q843, E855, and N857 each contribute to the Mn(2+) site. The MGS-like domain maps to 966-1113 (GSLPAQGTVF…QELHRVIGGV (148 aa)). The tract at residues 966–1115 (GSLPAQGTVF…LHRVIGGVER (150 aa)) is allosteric domain.

It belongs to the CarB family. As to quaternary structure, composed of two chains; the small (or glutamine) chain promotes the hydrolysis of glutamine to ammonia, which is used by the large (or ammonia) chain to synthesize carbamoyl phosphate. Tetramer of heterodimers (alpha,beta)4. It depends on Mg(2+) as a cofactor. Mn(2+) is required as a cofactor.

It carries out the reaction hydrogencarbonate + L-glutamine + 2 ATP + H2O = carbamoyl phosphate + L-glutamate + 2 ADP + phosphate + 2 H(+). It catalyses the reaction hydrogencarbonate + NH4(+) + 2 ATP = carbamoyl phosphate + 2 ADP + phosphate + 2 H(+). The protein operates within amino-acid biosynthesis; L-arginine biosynthesis; carbamoyl phosphate from bicarbonate: step 1/1. It participates in pyrimidine metabolism; UMP biosynthesis via de novo pathway; (S)-dihydroorotate from bicarbonate: step 1/3. Its function is as follows. Large subunit of the glutamine-dependent carbamoyl phosphate synthetase (CPSase). CPSase catalyzes the formation of carbamoyl phosphate from the ammonia moiety of glutamine, carbonate, and phosphate donated by ATP, constituting the first step of 2 biosynthetic pathways, one leading to arginine and/or urea and the other to pyrimidine nucleotides. The large subunit (synthetase) binds the substrates ammonia (free or transferred from glutamine from the small subunit), hydrogencarbonate and ATP and carries out an ATP-coupled ligase reaction, activating hydrogencarbonate by forming carboxy phosphate which reacts with ammonia to form carbamoyl phosphate. The polypeptide is Carbamoyl phosphate synthase large chain (Mycobacterium tuberculosis (strain CDC 1551 / Oshkosh)).